The chain runs to 140 residues: Neuropeptide CCHamide-2 (140 aa).

The N-terminal stretch at 1 to 22 is a signal peptide; the sequence is MAQMYLAVTIIALLAISHGVSA. A disulfide bond links cysteine 26 and cysteine 33. Histidine 37 bears the Histidine amide mark. Residues 41 to 140 constitute a propeptide that is removed on maturation; sequence SGDTSAMDQL…PDDGYYIESL (100 aa).

In terms of tissue distribution, expressed in corpora cardiaca (CC), corpora allata (CA), antennal lobe (AL) and gnathal ganglion (GNG) (at protein level). Expression detected in few animals (at protein level).

Its subcellular location is the secreted. Ligand for the CCHamide-2 receptor CCHa2-R. The polypeptide is Neuropeptide CCHamide-2 (Agrotis ipsilon (Black cutworm moth)).